The primary structure comprises 477 residues: Dihydrolipoyl dehydrogenase (477 aa).

Residues 34-49 (EKYK…GGTC), Lys-58, and Gly-122 each bind FAD. Cys-49 and Cys-54 are disulfide-bonded. Residues 188–192 (GAGVI), Glu-211, Val-245, and 276–279 (AVGR) each bind NAD(+). FAD is bound by residues Asp-319 and Ala-327. His-451 serves as the catalytic Proton acceptor.

The protein belongs to the class-I pyridine nucleotide-disulfide oxidoreductase family. As to quaternary structure, homodimer. The cofactor is FAD.

Its subcellular location is the cytoplasm. It catalyses the reaction N(6)-[(R)-dihydrolipoyl]-L-lysyl-[protein] + NAD(+) = N(6)-[(R)-lipoyl]-L-lysyl-[protein] + NADH + H(+). Functionally, the pyruvate dehydrogenase complex catalyzes the overall conversion of pyruvate to acetyl-CoA and CO(2). It contains multiple copies of three enzymatic components: pyruvate dehydrogenase (E1), dihydrolipoamide acetyltransferase (E2) and lipoamide dehydrogenase (E3). The sequence is that of Dihydrolipoyl dehydrogenase from Azotobacter vinelandii.